Reading from the N-terminus, the 388-residue chain is Succinate--CoA ligase [ADP-forming] subunit beta (388 aa).

An ATP-grasp domain is found at 9–244; that stretch reads KAIFRSMGVA…LEEEDPKEIE (236 aa). Residues K46, 53 to 55, E99, C102, and E107 contribute to the ATP site; that span reads GRG. Mg(2+)-binding residues include N199 and D213. Substrate is bound by residues N264 and 321 to 323; that span reads GIM.

Belongs to the succinate/malate CoA ligase beta subunit family. In terms of assembly, heterotetramer of two alpha and two beta subunits. Requires Mg(2+) as cofactor.

It carries out the reaction succinate + ATP + CoA = succinyl-CoA + ADP + phosphate. It catalyses the reaction GTP + succinate + CoA = succinyl-CoA + GDP + phosphate. It participates in carbohydrate metabolism; tricarboxylic acid cycle; succinate from succinyl-CoA (ligase route): step 1/1. Functionally, succinyl-CoA synthetase functions in the citric acid cycle (TCA), coupling the hydrolysis of succinyl-CoA to the synthesis of either ATP or GTP and thus represents the only step of substrate-level phosphorylation in the TCA. The beta subunit provides nucleotide specificity of the enzyme and binds the substrate succinate, while the binding sites for coenzyme A and phosphate are found in the alpha subunit. In Staphylococcus saprophyticus subsp. saprophyticus (strain ATCC 15305 / DSM 20229 / NCIMB 8711 / NCTC 7292 / S-41), this protein is Succinate--CoA ligase [ADP-forming] subunit beta.